The following is a 164-amino-acid chain: Protein DOWNSTREAM OF FLC (164 aa).

The N-terminal stretch at 1 to 23 (MAKSFVPLIAVLCVLVLPLAAMA) is a signal peptide. 3 disulfides stabilise this stretch: C36-C107, C39-C148, and C60-C95.

The protein belongs to the Ole e I family.

It localises to the secreted. Functionally, part of a three-gene cluster containing FLC, UFC and DFC, which is coordinately regulated in response to vernalization. Not regulated by FLX. The chain is Protein DOWNSTREAM OF FLC (DFC) from Arabidopsis thaliana (Mouse-ear cress).